The following is a 431-amino-acid chain: Keratin, type I cytoskeletal 18 (431 aa).

Residues Ser2–Asn83 are head. Ser12 bears the Phosphoserine mark. Residue Thr13 is modified to Phosphothreonine. A phosphoserine mark is found at Ser22 and Ser36. Residues Glu84–Ala119 form a coil 1A region. Positions Glu84–Leu395 constitute an IF rod domain. A linker 1 region spans residues Leu120–Ile136. The coil 1B stretch occupies residues Val137 to Leu228. The interval Arg229–Ile252 is linker 12. Residues Met253–Gly390 form a coil 2 region. The tail stretch occupies residues Gly391–Leu431.

Belongs to the intermediate filament family. As to quaternary structure, heterotetramer of two type I and two type II keratins. Keratin-18 associates with keratin-8. In terms of processing, proteolytically cleaved by caspases during epithelial cell apoptosis. As to expression, expressed in simple epithelia such as intestinal mucosa, bile duct, hepatocytes, renal tubules, endothelia, ocular lens epithelium, and in a variety of mesenchymally-derived cells such as blood vessel endothelia, pillar gill cells, optic nerve glial cells, fibroblasts, interstitial cells, chondrocytes and ovarian theca cells. Also expressed in epidermis, pharyngeal mucosa, mucosa of anterior esophagus, gill mucosa and cornea.

In terms of biological role, when phosphorylated, plays a role in filament reorganization. The sequence is that of Keratin, type I cytoskeletal 18 from Danio rerio (Zebrafish).